Reading from the N-terminus, the 590-residue chain is MHLARLVGSCSLLLLLGALSGWAASDDPIEKVIEGINRGLSNAEREVGKALDGINSGITHAGREVEKVFNGLSNMGSHTGKELDKGVQGLNHGMDKVAHEINHGIGQAGKEAEKLGHGVNNAAGQVGKEADKLIHHGVHHGANQAGSEAGKFGQGVDNAAGQAGNEAGRFGQGVHHAAGQAGNEAGRFGQGVHHAAGQAGNEAGRFGQGAHHGLSEGWKETEKFGQGIHHAAGQVGKEAEKFGQGAHHAAGQAGNEAGRFGQGVHHGLSEGWKETEKFGQGVHHTAGQVGKEAEKFGQGAHHAAGQAGNEAGRFGQGAHHAAGQAGNEAGRFGQGVHHGLSEGWKETEKFGQGVHHAASQFGKETEKLGHGVHHGVNEAWKEAEKFGQGVHHAASQVGKEEDRVVQGLHHGVSQAGREAGQFGHDIHHTAGQAGKEGDIAVHGVQPGVHEAGKEAGQFGQGVHHTLEQAGKEADKAVQGFHTGVHQAGKEAEKLGQGVNHAADQAGKEVEKLGQGAHHAAGQAGKELQNAHNGVNQASKEANQLLNGNHQSGSSSHQGGATTTPLASGASVNTPFINLPALWRSVANIMP.

The signal sequence occupies residues 1 to 25 (MHLARLVGSCSLLLLLGALSGWAAS). 4 disordered regions span residues 182-213 (GNEA…AHHG), 242-266 (FGQG…GVHH), 297-338 (GQGA…GVHH), and 545-570 (LNGN…SGAS). Low complexity-rich tracts occupy residues 190 to 200 (QGVHHAAGQAG), 243 to 254 (GQGAHHAAGQAG), 297 to 330 (GQGA…NEAG), and 546 to 559 (NGNH…HQGG). Residues 560 to 570 (ATTTPLASGAS) show a composition bias toward polar residues.

As to expression, detected in thymus, uterus and esophagus.

The protein localises to the secreted. This chain is Suprabasin (SBSN), found in Homo sapiens (Human).